The following is a 54-amino-acid chain: UPF0391 membrane protein Pmen_0080 (54 aa).

2 helical membrane passes run 4–24 (WALT…GGIA) and 28–48 (AGIA…SFIM).

This sequence belongs to the UPF0391 family.

It localises to the cell membrane. The chain is UPF0391 membrane protein Pmen_0080 from Ectopseudomonas mendocina (strain ymp) (Pseudomonas mendocina).